The sequence spans 232 residues: Ribosomal RNA small subunit methyltransferase G (232 aa).

S-adenosyl-L-methionine-binding positions include Gly75, Phe80, 126–127 (AE), and Arg143.

Belongs to the methyltransferase superfamily. RNA methyltransferase RsmG family.

The protein localises to the cytoplasm. Specifically methylates the N7 position of a guanine in 16S rRNA. This Fusobacterium nucleatum subsp. nucleatum (strain ATCC 25586 / DSM 15643 / BCRC 10681 / CIP 101130 / JCM 8532 / KCTC 2640 / LMG 13131 / VPI 4355) protein is Ribosomal RNA small subunit methyltransferase G.